The sequence spans 160 residues: MDPQPGDQAQQPPPPTLTHPRFTLELEFVSSLANPYYLSHLAVNYPNLLGINKSGDDNDTNDSGDPDAQAFAAYLAYLYSYWKTPEYAQFLTHPGATLRALRLLQEDTFRRDIIRPQVIEGLAGTGIENEQGGTEANNPGEAEGEQTKGTADQQDGSSKT.

Residues 124 to 160 (GTGIENEQGGTEANNPGEAEGEQTKGTADQQDGSSKT) are disordered. The segment covering 147–160 (TKGTADQQDGSSKT) has biased composition (polar residues).

Belongs to the Mediator complex subunit 31 family. In terms of assembly, component of the Mediator complex.

It is found in the nucleus. Functionally, component of the Mediator complex, a coactivator involved in the regulated transcription of nearly all RNA polymerase II-dependent genes. Mediator functions as a bridge to convey information from gene-specific regulatory proteins to the basal RNA polymerase II transcription machinery. Mediator is recruited to promoters by direct interactions with regulatory proteins and serves as a scaffold for the assembly of a functional preinitiation complex with RNA polymerase II and the general transcription factors. In Aspergillus terreus (strain NIH 2624 / FGSC A1156), this protein is Mediator of RNA polymerase II transcription subunit 31 (soh1).